Reading from the N-terminus, the 442-residue chain is Proline--tRNA ligase (442 aa).

Belongs to the class-II aminoacyl-tRNA synthetase family. ProS type 2 subfamily. Homodimer.

The protein resides in the cytoplasm. It catalyses the reaction tRNA(Pro) + L-proline + ATP = L-prolyl-tRNA(Pro) + AMP + diphosphate. Functionally, catalyzes the attachment of proline to tRNA(Pro) in a two-step reaction: proline is first activated by ATP to form Pro-AMP and then transferred to the acceptor end of tRNA(Pro). The sequence is that of Proline--tRNA ligase from Brucella abortus (strain S19).